Reading from the N-terminus, the 845-residue chain is Poly(A) RNA polymerase gld-4 (845 aa).

A disordered region spans residues 1 to 55 (MNEDSRLSSSQQPSTSTPRSSIPSTMNSDEPNTCRRLSQSQEQPSTSRTCKSETP). Over residues 7–25 (LSSSQQPSTSTPRSSIPST) the composition is skewed to low complexity. The segment covering 26 to 49 (MNSDEPNTCRRLSQSQEQPSTSRT) has biased composition (polar residues). Mg(2+)-binding residues include Asp-139 and Asp-141. One can recognise a PAP-associated domain in the interval 276–335 (NLGHLLLRFLELYSLEFNFEEMGISPGQCCYIPKSASGARYGHKQAQPGNLALEDPLLTA). Positions 482 to 506 (KSLEKMPACDDNKKEEELVATRETD) are enriched in basic and acidic residues. 2 disordered regions span residues 482 to 733 (KSLE…SEEP) and 788 to 845 (NALT…RLQR). Positions 535 to 551 (TSTQSVNTSATVSTAAS) are enriched in low complexity. Composition is skewed to polar residues over residues 561 to 571 (PGLSSSMGNQS) and 579 to 588 (GINNRNNSAV). A compositionally biased stretch (basic and acidic residues) spans 605–620 (RESKRTQTTSEDKMQD). Over residues 643–653 (SHKHRNAHPQR) the composition is skewed to basic residues. Polar residues-rich tracts occupy residues 654–666 (QRPSIRNLSQGSD), 695–732 (RQQTNTRNCGPTNNIPYDSFRSQNKNSTLDGSNNSSEE), 788–805 (NALTTSPMTPPSAHTSMQ), and 819–828 (DNNSATSSTD).

Interacts with gls-1 isoform C. Requires Mg(2+) as cofactor. Mn(2+) is required as a cofactor. As to expression, germline-specific.

The protein localises to the cytoplasm. It localises to the cytoplasmic granule. Its subcellular location is the perinuclear region. It catalyses the reaction RNA(n) + ATP = RNA(n)-3'-adenine ribonucleotide + diphosphate. In terms of biological role, cytoplasmic poly(A) RNA polymerase that adds successive AMP monomers to the 3'-end of specific RNAs, forming a poly(A) tail. The enzymatic activity is enhanced by its interaction with gls-1. Required, together with gld-2, for early meiotic progression in male and female germ cells and for gld-1 protein accumulation in the hermaphrodite germline. In the germline, forms a complex with gls-1 which directly binds to gld-1 mRNA and prevents its degradation. In Caenorhabditis elegans, this protein is Poly(A) RNA polymerase gld-4.